The following is a 481-amino-acid chain: MSKNKHELGSPFTVPLLLNTLDVPAFAVDADGAVVAWDDQIAALLETAPEDAIGVTDIGERLNDDGSRALANKVADTPIDAHHEYDGVGLADESYALLTGDYVYEDTTVAGNTDLWFIATPVYHTGEFRGVIEIVQDRSSSARYQSELQALFGELVDTLDAYDAGRFDATVDIAAEDTLLDDEYIQIGRNLTEFGDTLAAHITEVHNDVERLEAASQAVSESSAEIDELSTAQSTNVSTVATEVETLSATVQEIASTADEVVDTSATAERLADDGSAAASDAADMMADVATAADSVTSDVEALQNRIEDIDEVVDVITGIAEQTNMLALNASIEAARAGEEGEGFAVVAEEVKALAEDAQSNAGHIESLVSEIQRDTADTVTDLVTTTDRIEDAVAQVEDAMASFEEIVTAVEATAEGIEQVSDATNEQAASAEEIAAMVDETADLADDITTAVADIVSQTEAQSAMLHDLDESVSELHDQ.

Positions 10–81 (SPFTVPLLLN…NKVADTPIDA (72 aa)) constitute a PAS domain. The Methyl-accepting transducer domain maps to 208–444 (DVERLEAASQ…EIAAMVDETA (237 aa)).

It belongs to the methyl-accepting chemotaxis (MCP) protein family.

Its subcellular location is the cytoplasm. Its function is as follows. Potentially involved in chemo- or phototactic signal transduction. In Halobacterium salinarum (strain ATCC 700922 / JCM 11081 / NRC-1) (Halobacterium halobium), this protein is Halobacterial transducer protein 9 (htr9).